The following is a 427-amino-acid chain: Glutamate-1-semialdehyde 2,1-aminomutase (427 aa).

Residue Lys265 is modified to N6-(pyridoxal phosphate)lysine.

This sequence belongs to the class-III pyridoxal-phosphate-dependent aminotransferase family. HemL subfamily. As to quaternary structure, homodimer. It depends on pyridoxal 5'-phosphate as a cofactor.

It is found in the cytoplasm. It catalyses the reaction (S)-4-amino-5-oxopentanoate = 5-aminolevulinate. Its pathway is porphyrin-containing compound metabolism; protoporphyrin-IX biosynthesis; 5-aminolevulinate from L-glutamyl-tRNA(Glu): step 2/2. The polypeptide is Glutamate-1-semialdehyde 2,1-aminomutase (Pseudomonas savastanoi pv. phaseolicola (strain 1448A / Race 6) (Pseudomonas syringae pv. phaseolicola (strain 1448A / Race 6))).